A 158-amino-acid chain; its full sequence is Protein Smg homolog (158 aa).

The protein belongs to the Smg family.

This chain is Protein Smg homolog, found in Shewanella sp. (strain MR-4).